The following is a 296-amino-acid chain: UPF0761 membrane protein YE0031 (296 aa).

7 helical membrane passes run 44 to 64 (LLSL…FPMF), 67 to 87 (ISIK…GDII), 108 to 128 (GLIV…NIIW), 136 to 156 (LVFS…LVGA), 185 to 205 (LFPL…VPTV), 212 to 232 (ALIG…GFTM), and 246 to 266 (VLAV…IVLL).

It belongs to the UPF0761 family.

The protein localises to the cell inner membrane. This Yersinia enterocolitica serotype O:8 / biotype 1B (strain NCTC 13174 / 8081) protein is UPF0761 membrane protein YE0031.